The primary structure comprises 119 residues: Dihydroneopterin aldolase (119 aa).

Substrate-binding positions include Glu-21, Tyr-53, and 72–73 (IE). Lys-99 serves as the catalytic Proton donor/acceptor.

The protein belongs to the DHNA family.

It catalyses the reaction 7,8-dihydroneopterin = 6-hydroxymethyl-7,8-dihydropterin + glycolaldehyde. It functions in the pathway cofactor biosynthesis; tetrahydrofolate biosynthesis; 2-amino-4-hydroxy-6-hydroxymethyl-7,8-dihydropteridine diphosphate from 7,8-dihydroneopterin triphosphate: step 3/4. In terms of biological role, catalyzes the conversion of 7,8-dihydroneopterin to 6-hydroxymethyl-7,8-dihydropterin. The polypeptide is Dihydroneopterin aldolase (folB) (Streptococcus pyogenes serotype M6 (strain ATCC BAA-946 / MGAS10394)).